Here is a 240-residue protein sequence, read N- to C-terminus: Probable 2-phosphosulfolactate phosphatase (240 aa).

It belongs to the ComB family. Mg(2+) serves as cofactor.

The catalysed reaction is (2R)-O-phospho-3-sulfolactate + H2O = (2R)-3-sulfolactate + phosphate. The polypeptide is Probable 2-phosphosulfolactate phosphatase (Clostridium kluyveri (strain NBRC 12016)).